A 374-amino-acid polypeptide reads, in one-letter code: Queuine tRNA-ribosyltransferase (374 aa).

Catalysis depends on aspartate 91, which acts as the Proton acceptor. Residues 91-95 (DSGGY), aspartate 145, glutamine 189, and glycine 216 each bind substrate. An RNA binding region spans residues 247–253 (GVGTVPD). Residue aspartate 266 is the Nucleophile of the active site. The segment at 271-275 (TRNAR) is RNA binding; important for wobble base 34 recognition. Zn(2+)-binding residues include cysteine 304, cysteine 306, cysteine 309, and histidine 335.

It belongs to the queuine tRNA-ribosyltransferase family. In terms of assembly, homodimer. Within each dimer, one monomer is responsible for RNA recognition and catalysis, while the other monomer binds to the replacement base PreQ1. It depends on Zn(2+) as a cofactor.

The catalysed reaction is 7-aminomethyl-7-carbaguanine + guanosine(34) in tRNA = 7-aminomethyl-7-carbaguanosine(34) in tRNA + guanine. It participates in tRNA modification; tRNA-queuosine biosynthesis. Its function is as follows. Catalyzes the base-exchange of a guanine (G) residue with the queuine precursor 7-aminomethyl-7-deazaguanine (PreQ1) at position 34 (anticodon wobble position) in tRNAs with GU(N) anticodons (tRNA-Asp, -Asn, -His and -Tyr). Catalysis occurs through a double-displacement mechanism. The nucleophile active site attacks the C1' of nucleotide 34 to detach the guanine base from the RNA, forming a covalent enzyme-RNA intermediate. The proton acceptor active site deprotonates the incoming PreQ1, allowing a nucleophilic attack on the C1' of the ribose to form the product. After dissociation, two additional enzymatic reactions on the tRNA convert PreQ1 to queuine (Q), resulting in the hypermodified nucleoside queuosine (7-(((4,5-cis-dihydroxy-2-cyclopenten-1-yl)amino)methyl)-7-deazaguanosine). The sequence is that of Queuine tRNA-ribosyltransferase from Leptospira borgpetersenii serovar Hardjo-bovis (strain JB197).